We begin with the raw amino-acid sequence, 398 residues long: Cell division protein FtsZ (398 aa).

GTP is bound by residues 21–25, 108–110, E139, R143, and D187; these read GGGGN and GTG.

Belongs to the FtsZ family. In terms of assembly, homodimer. Polymerizes to form a dynamic ring structure in a strictly GTP-dependent manner. Interacts directly with several other division proteins.

The protein resides in the cytoplasm. Its function is as follows. Essential cell division protein that forms a contractile ring structure (Z ring) at the future cell division site. The regulation of the ring assembly controls the timing and the location of cell division. One of the functions of the FtsZ ring is to recruit other cell division proteins to the septum to produce a new cell wall between the dividing cells. Binds GTP and shows GTPase activity. This Pseudomonas putida (strain ATCC 47054 / DSM 6125 / CFBP 8728 / NCIMB 11950 / KT2440) protein is Cell division protein FtsZ.